Here is a 386-residue protein sequence, read N- to C-terminus: Uroporphyrinogen decarboxylase (386 aa).

R44, A46, R48, R57, D93, Y170, S225, and H364 together coordinate coproporphyrinogen I. The coproporphyrinogen III site is built by R44, A46, and R48. The coproporphyrinogen III site is built by D93, Y170, S225, and H364.

This sequence belongs to the uroporphyrinogen decarboxylase family. As to quaternary structure, homodimer.

The protein resides in the cytoplasm. The protein localises to the cytosol. The enzyme catalyses uroporphyrinogen III + 4 H(+) = coproporphyrinogen III + 4 CO2. The protein operates within porphyrin-containing compound metabolism; protoporphyrin-IX biosynthesis; coproporphyrinogen-III from 5-aminolevulinate: step 4/4. Catalyzes the decarboxylation of four acetate groups of uroporphyrinogen-III to yield coproporphyrinogen-III. This is Uroporphyrinogen decarboxylase from Drosophila virilis (Fruit fly).